We begin with the raw amino-acid sequence, 525 residues long: Probable lipid II flippase MurJ (525 aa).

14 consecutive transmembrane segments (helical) span residues 10-30 (LLKSGIIVSAMTLISRVLGLV), 32-52 (DVVVANLMGAGASADVFFFAN), 100-120 (VLVTIVTLIGVLGSGAVTALF), 140-160 (LASLLLKITFPYLWFITFVAL), 171-191 (FAVSSFTPVFLNVMMILCAWY), 203-223 (LAIGVFLGGLVQFLFQLPFLI), 247-267 (MIPALFGVSVSQINLLFDSFV), 285-305 (LLEFPLGLFGIAIATVILPAL), 330-350 (FLGIPAMLGLMVLAKPMLMVL), 368-388 (LLAYSSGLLSFMLIKVLAPGY), 402-422 (IIAMVSNIVLNAIFAWFYGYV), 423-443 (GLAVATSMSAFLNMALLYRGL), 455-475 (TVWFVARLAMAGAVMTGALLW), and 495-515 (LTGLIGLGVASYLAILLLLGV).

Belongs to the MurJ/MviN family.

It is found in the cell inner membrane. The protein operates within cell wall biogenesis; peptidoglycan biosynthesis. Functionally, involved in peptidoglycan biosynthesis. Transports lipid-linked peptidoglycan precursors from the inner to the outer leaflet of the cytoplasmic membrane. This chain is Probable lipid II flippase MurJ, found in Vibrio cholerae serotype O1 (strain ATCC 39315 / El Tor Inaba N16961).